The primary structure comprises 34 residues: Photosystem II reaction center protein M (34 aa).

Residues 5–25 (ILAFIATALFILIPTAFLLII) traverse the membrane as a helical segment.

The protein belongs to the PsbM family. As to quaternary structure, PSII is composed of 1 copy each of membrane proteins PsbA, PsbB, PsbC, PsbD, PsbE, PsbF, PsbH, PsbI, PsbJ, PsbK, PsbL, PsbM, PsbT, PsbX, PsbY, PsbZ, Psb30/Ycf12, at least 3 peripheral proteins of the oxygen-evolving complex and a large number of cofactors. It forms dimeric complexes.

It is found in the plastid. The protein localises to the chloroplast thylakoid membrane. Functionally, one of the components of the core complex of photosystem II (PSII). PSII is a light-driven water:plastoquinone oxidoreductase that uses light energy to abstract electrons from H(2)O, generating O(2) and a proton gradient subsequently used for ATP formation. It consists of a core antenna complex that captures photons, and an electron transfer chain that converts photonic excitation into a charge separation. This subunit is found at the monomer-monomer interface. The sequence is that of Photosystem II reaction center protein M from Lolium perenne (Perennial ryegrass).